The following is a 126-amino-acid chain: Large ribosomal subunit protein bL12 (126 aa).

This sequence belongs to the bacterial ribosomal protein bL12 family. In terms of assembly, homodimer. Part of the ribosomal stalk of the 50S ribosomal subunit. Forms a multimeric L10(L12)X complex, where L10 forms an elongated spine to which 2 to 4 L12 dimers bind in a sequential fashion. Binds GTP-bound translation factors.

Forms part of the ribosomal stalk which helps the ribosome interact with GTP-bound translation factors. Is thus essential for accurate translation. The chain is Large ribosomal subunit protein bL12 from Methylobacterium sp. (strain 4-46).